Here is a 65-residue protein sequence, read N- to C-terminus: Muscarinic toxin-like protein 2 (65 aa).

Disulfide bonds link Cys-3–Cys-24, Cys-17–Cys-42, Cys-46–Cys-57, and Cys-58–Cys-63.

This sequence belongs to the three-finger toxin family. Short-chain subfamily. Type C muscarinic toxin sub-subfamily. In terms of assembly, monomer. As to expression, expressed by the venom gland.

Its subcellular location is the secreted. The chain is Muscarinic toxin-like protein 2 from Naja kaouthia (Monocled cobra).